The chain runs to 420 residues: Dynein axonemal assembly factor 4 (420 aa).

Residues 3–87 (LQVSDYSWQQ…KEAAMWETLS (85 aa)) enclose the CS domain. Residues 7 to 103 (DYSWQQTKTA…EMMQRIREKS (97 aa)) are mediates interaction with ESR1 and STUB1. TPR repeat units lie at residues 290–323 (PEWL…NNKM), 324–357 (PLLY…LMPP), and 366–399 (MKAH…DPSN).

Interacts with ZMYND10. Interacts with STUB1. Interacts with ESR1 and ESR2. Interacts with DNAAF2. Interacts with CCT3, CCT4, CCT5 and CCT8. Interacts with DNAAF6/PIH1D3.

It localises to the nucleus. The protein resides in the cytoplasm. The protein localises to the cell projection. Its subcellular location is the neuron projection. It is found in the dynein axonemal particle. In terms of biological role, involved in neuronal migration during development of the cerebral neocortex. May regulate the stability and proteasomal degradation of the estrogen receptors that play an important role in neuronal differentiation, survival and plasticity. Axonemal dynein assembly factor required for ciliary motility. The chain is Dynein axonemal assembly factor 4 from Pan troglodytes (Chimpanzee).